Here is a 31-residue protein sequence, read N- to C-terminus: Cytochrome b6-f complex subunit 8 (31 aa).

Residues 5-25 (IVSMAWAALMVVFTFSLSLVI) traverse the membrane as a helical segment.

Belongs to the PetN family. In terms of assembly, the 4 large subunits of the cytochrome b6-f complex are cytochrome b6, subunit IV (17 kDa polypeptide, PetD), cytochrome f and the Rieske protein, while the 4 small subunits are PetG, PetL, PetM and PetN. The complex functions as a dimer.

It is found in the plastid membrane. Component of the cytochrome b6-f complex, which mediates electron transfer between photosystem II (PSII) and photosystem I (PSI), cyclic electron flow around PSI, and state transitions. This chain is Cytochrome b6-f complex subunit 8, found in Cuscuta gronovii (Common dodder).